A 213-amino-acid polypeptide reads, in one-letter code: Redox-sensing transcriptional repressor Rex (213 aa).

The H-T-H motif DNA-binding region spans 17–56; the sequence is LYYRIFKRFYADQVEKASSKQIADAMGIDSATVRRDFSYF. 91–96 serves as a coordination point for NAD(+); sequence GCGNIG.

The protein belongs to the transcriptional regulatory Rex family. Homodimer.

Its subcellular location is the cytoplasm. Functionally, modulates transcription in response to changes in cellular NADH/NAD(+) redox state. This is Redox-sensing transcriptional repressor Rex from Streptococcus uberis (strain ATCC BAA-854 / 0140J).